The chain runs to 467 residues: ATP synthase subunit beta (467 aa).

150-157 (GGAGVGKT) provides a ligand contact to ATP.

The protein belongs to the ATPase alpha/beta chains family. F-type ATPases have 2 components, CF(1) - the catalytic core - and CF(0) - the membrane proton channel. CF(1) has five subunits: alpha(3), beta(3), gamma(1), delta(1), epsilon(1). CF(0) has three main subunits: a(1), b(2) and c(9-12). The alpha and beta chains form an alternating ring which encloses part of the gamma chain. CF(1) is attached to CF(0) by a central stalk formed by the gamma and epsilon chains, while a peripheral stalk is formed by the delta and b chains.

Its subcellular location is the cell inner membrane. It catalyses the reaction ATP + H2O + 4 H(+)(in) = ADP + phosphate + 5 H(+)(out). Produces ATP from ADP in the presence of a proton gradient across the membrane. The catalytic sites are hosted primarily by the beta subunits. The sequence is that of ATP synthase subunit beta from Vibrio alginolyticus.